Here is an 88-residue protein sequence, read N- to C-terminus: U-scoloptoxin(XY)-Er1b (88 aa).

An N-terminal signal peptide occupies residues 1 to 24; the sequence is MASQVVLSFALVVVLAVFVGQVDS. The interval 66–88 is disordered; the sequence is RPELSPGALDDSSEEKDNEASLA. Residues 79 to 88 constitute a propeptide that is removed on maturation; it reads EEKDNEASLA.

Belongs to the scoloptoxin-XY family. In terms of processing, contains 3 disulfide bonds. In terms of tissue distribution, expressed by the venom gland.

The protein resides in the secreted. This is U-scoloptoxin(XY)-Er1b from Ethmostigmus rubripes (Giant centipede).